The following is a 648-amino-acid chain: Biosynthetic arginine decarboxylase (648 aa).

Residue Lys-109 is modified to N6-(pyridoxal phosphate)lysine. Substrate is bound at residue 291 to 301; sequence IDVGGGLGIDF.

Belongs to the Orn/Lys/Arg decarboxylase class-II family. SpeA subfamily. Requires Mg(2+) as cofactor. It depends on pyridoxal 5'-phosphate as a cofactor.

The enzyme catalyses L-arginine + H(+) = agmatine + CO2. Catalyzes the biosynthesis of agmatine from arginine. The chain is Biosynthetic arginine decarboxylase from Prochlorococcus marinus subsp. pastoris (strain CCMP1986 / NIES-2087 / MED4).